The chain runs to 340 residues: Melanin-concentrating hormone receptor 2 (340 aa).

Topologically, residues 1–34 (MNPFHSSCWNTSAELSNKSWNKEFAYQTASAVDT) are extracellular. N-linked (GlcNAc...) asparagine glycans are attached at residues N10 and N17. The helical transmembrane segment at 35–57 (VILPSMIGIICSTGLVGNILIVF) threads the bilayer. Topologically, residues 58–69 (TIIRSRKKTVPD) are cytoplasmic. Residues 70 to 92 (IYICNLAVADLVHIIGMPFLIHQ) form a helical membrane-spanning segment. The Extracellular portion of the chain corresponds to 93 to 106 (WARGGEWVFGGPLC). Residues 107-129 (TIITSLDTCNQFACSAIMTVMSV) form a helical membrane-spanning segment. At 130 to 149 (DRYFALVQPFRLTSWRTRYK) the chain is on the cytoplasmic side. Residues 150–172 (TIRINLGLWAASFILALPVWIYS) form a helical membrane-spanning segment. Over 173–198 (KVIKFKDGVESCAFDLTSPDDVLWYT) the chain is Extracellular. A helical membrane pass occupies residues 199 to 221 (LYLTITTFFFPLPLILVCYILIL). Topologically, residues 222 to 252 (CYTWEMYQQNKDARCCNPSVPKQRVMKLTKM) are cytoplasmic. The chain crosses the membrane as a helical span at residues 253-272 (VLVLVAVFILSAAPYHVIQL). Over 273 to 286 (VNLQMEQPTLAFYV) the chain is Extracellular. Residues 287-309 (GYYLSICLSYASSSINPFLYILL) form a helical membrane-spanning segment. The Cytoplasmic portion of the chain corresponds to 310–340 (SGNFQKRLPQIQRRVTDKEIKNMGNTLKSHF).

The protein belongs to the G-protein coupled receptor 1 family.

It localises to the cell membrane. Its function is as follows. Receptor for melanin-concentrating hormone, coupled to G proteins that activate phosphoinositide hydrolysis. The protein is Melanin-concentrating hormone receptor 2 (MCHR2) of Macaca fascicularis (Crab-eating macaque).